Consider the following 585-residue polypeptide: Glucose oxidase-like protein fsoC (585 aa).

Ala104 contacts FAD. Catalysis depends on His521, which acts as the Proton donor. His564 (proton acceptor) is an active-site residue.

Belongs to the GMC oxidoreductase family. Monomer. It depends on FAD as a cofactor.

Its function is as follows. Glucose oxidase-like protein; part of the gene cluster that mediates the biosynthesis of the enfumafungin-type antibiotic fuscoatroside. Four enzymes are sufficient to produce fuscoatroside: the terpene cyclase-glycosyl transferase fusion protein fsoAthe cytochrome P450 monoxygenases fsoD and fsoE, and the acetyltransferase fsoF; the cytochrome P450 monooxygenase fsoB and the glucose oxidase-like protein fsoC do not seem to play a role in biosynthesis of fuscoatroside. Glucose oxidase; part of the gene cluster that mediates the biosynthesis of the enfumafungin-type antibiotic, fuscoatroside. This chain is Glucose oxidase-like protein fsoC, found in Humicola fuscoatra.